The chain runs to 184 residues: ATP synthase subunit b, chloroplastic (184 aa).

A helical transmembrane segment spans residues 27 to 49 (LATNPINLSVVLGVLIFFGKGVL).

This sequence belongs to the ATPase B chain family. As to quaternary structure, F-type ATPases have 2 components, F(1) - the catalytic core - and F(0) - the membrane proton channel. F(1) has five subunits: alpha(3), beta(3), gamma(1), delta(1), epsilon(1). F(0) has four main subunits: a(1), b(1), b'(1) and c(10-14). The alpha and beta chains form an alternating ring which encloses part of the gamma chain. F(1) is attached to F(0) by a central stalk formed by the gamma and epsilon chains, while a peripheral stalk is formed by the delta, b and b' chains.

It is found in the plastid. The protein localises to the chloroplast thylakoid membrane. Its function is as follows. F(1)F(0) ATP synthase produces ATP from ADP in the presence of a proton or sodium gradient. F-type ATPases consist of two structural domains, F(1) containing the extramembraneous catalytic core and F(0) containing the membrane proton channel, linked together by a central stalk and a peripheral stalk. During catalysis, ATP synthesis in the catalytic domain of F(1) is coupled via a rotary mechanism of the central stalk subunits to proton translocation. Component of the F(0) channel, it forms part of the peripheral stalk, linking F(1) to F(0). This is ATP synthase subunit b, chloroplastic from Nicotiana sylvestris (Wood tobacco).